Here is a 94-residue protein sequence, read N- to C-terminus: Putative membrane protein insertion efficiency factor (94 aa).

The protein belongs to the UPF0161 family.

It localises to the cell inner membrane. Functionally, could be involved in insertion of integral membrane proteins into the membrane. This chain is Putative membrane protein insertion efficiency factor, found in Albidiferax ferrireducens (strain ATCC BAA-621 / DSM 15236 / T118) (Rhodoferax ferrireducens).